A 165-amino-acid chain; its full sequence is Large ribosomal subunit protein uL10 (165 aa).

The protein belongs to the universal ribosomal protein uL10 family. In terms of assembly, part of the ribosomal stalk of the 50S ribosomal subunit. The N-terminus interacts with L11 and the large rRNA to form the base of the stalk. The C-terminus forms an elongated spine to which L12 dimers bind in a sequential fashion forming a multimeric L10(L12)X complex.

Its function is as follows. Forms part of the ribosomal stalk, playing a central role in the interaction of the ribosome with GTP-bound translation factors. The sequence is that of Large ribosomal subunit protein uL10 from Pectobacterium atrosepticum (strain SCRI 1043 / ATCC BAA-672) (Erwinia carotovora subsp. atroseptica).